Consider the following 457-residue polypeptide: tRNA-2-methylthio-N(6)-dimethylallyladenosine synthase (457 aa).

The 116-residue stretch at 18–133 folds into the MTTase N-terminal domain; that stretch reads KKLFIETYGC…LPELIASVEA (116 aa). Cys-27, Cys-63, Cys-97, Cys-171, Cys-175, and Cys-178 together coordinate [4Fe-4S] cluster. Residues 157–390 enclose the Radical SAM core domain; that stretch reads CGNHISGFVS…IALQNRLSAE (234 aa). The TRAM domain maps to 393-456; sequence NRCIGKTYEV…SATLKGEEVF (64 aa).

Belongs to the methylthiotransferase family. MiaB subfamily. In terms of assembly, monomer. [4Fe-4S] cluster serves as cofactor.

The protein resides in the cytoplasm. The enzyme catalyses N(6)-dimethylallyladenosine(37) in tRNA + (sulfur carrier)-SH + AH2 + 2 S-adenosyl-L-methionine = 2-methylsulfanyl-N(6)-dimethylallyladenosine(37) in tRNA + (sulfur carrier)-H + 5'-deoxyadenosine + L-methionine + A + S-adenosyl-L-homocysteine + 2 H(+). Its function is as follows. Catalyzes the methylthiolation of N6-(dimethylallyl)adenosine (i(6)A), leading to the formation of 2-methylthio-N6-(dimethylallyl)adenosine (ms(2)i(6)A) at position 37 in tRNAs that read codons beginning with uridine. The chain is tRNA-2-methylthio-N(6)-dimethylallyladenosine synthase from Bacteroides fragilis (strain ATCC 25285 / DSM 2151 / CCUG 4856 / JCM 11019 / LMG 10263 / NCTC 9343 / Onslow / VPI 2553 / EN-2).